Reading from the N-terminus, the 50-residue chain is Large ribosomal subunit protein eL39 (50 aa).

It belongs to the eukaryotic ribosomal protein eL39 family. As to quaternary structure, part of the 50S ribosomal subunit. Interacts weakly with protein L23.

Binds to the 23S rRNA. Forms part of the polypeptide exit tunnel. This is Large ribosomal subunit protein eL39 (rpl39e) from Haloarcula marismortui (strain ATCC 43049 / DSM 3752 / JCM 8966 / VKM B-1809) (Halobacterium marismortui).